Reading from the N-terminus, the 501-residue chain is Probable cytochrome P450 6a20 (501 aa).

Residue Cys445 participates in heme binding.

Belongs to the cytochrome P450 family. Heme serves as cofactor.

It localises to the endoplasmic reticulum membrane. It is found in the microsome membrane. Its function is as follows. May be involved in the metabolism of insect hormones and in the breakdown of synthetic insecticides. The sequence is that of Probable cytochrome P450 6a20 (Cyp6a20) from Drosophila melanogaster (Fruit fly).